The primary structure comprises 590 residues: Ankyrin repeat domain-containing protein 13A (590 aa).

2 ANK repeats span residues 40–69 and 73–102; these read RGRT…DVTK and QGWT…YHNT. At Ser205 the chain carries Phosphoserine. UIM domains lie at 483-502, 519-538, 549-568, and 574-590; these read EDYE…SSRS, TYDA…STEG, RFDN…LEEW, and EEEA…LTDK. Phosphoserine is present on Ser586.

Interacts (via the UIM 3 and 4 repeats) with EGFR (ubiquitinated); the interaction is direct, inhibited by ANKRD13A monoubiquitination and may regulate EGFR internalization. In terms of processing, monoubiquitinated, inhibits interaction with ubiquitinated EGFR.

The protein resides in the cell membrane. It localises to the late endosome. Functionally, ubiquitin-binding protein that specifically recognizes and binds 'Lys-63'-linked ubiquitin. Does not bind 'Lys-48'-linked ubiquitin. Positively regulates the internalization of ligand-activated EGFR by binding to the Ub moiety of ubiquitinated EGFR at the cell membrane. In Homo sapiens (Human), this protein is Ankyrin repeat domain-containing protein 13A (ANKRD13A).